The following is a 377-amino-acid chain: MTNLFENYGRLPFSLIKGEDQYLFDDRGNKYLDFTSGIGVMNLGYSFEKGKVAVKAQLDSLSHLSNLYQNPLQEDVAEKLSQNHSYKAFFCNSGTEANEAALKLTHLIKKDQKILAFTDGFHGRTFGAMSATMQEKIQAGFSPLLPNFVASPFNDVVALEQILEKEKIGAIIFEIIQGEGGVLPISPDFVEALKSCQQKGILLIIDEIQTGIGRTGKLFAFEHFDFEPDIFTLAKALANGIPTGAMLAKNKYASYFSAGKHGSTFGGNPLAMASANEVLKEIDSDFLEKVTDKGIFFLKLLTEKLSVKATVKSIRGLGLMIGIQLTDEKKVPEVLALLRENGLLALSAGHDVIRLLPPLVMTKVELQKGAELLEKIL.

Residues 94 to 95 (GT) and Phe-121 each bind pyridoxal 5'-phosphate. Arg-124 contacts N(2)-acetyl-L-ornithine. 206 to 209 (DEIQ) is a pyridoxal 5'-phosphate binding site. Residue Lys-235 is modified to N6-(pyridoxal phosphate)lysine. Ser-263 provides a ligand contact to N(2)-acetyl-L-ornithine. A pyridoxal 5'-phosphate-binding site is contributed by Thr-264.

The protein belongs to the class-III pyridoxal-phosphate-dependent aminotransferase family. ArgD subfamily. In terms of assembly, homodimer. It depends on pyridoxal 5'-phosphate as a cofactor.

Its subcellular location is the cytoplasm. The catalysed reaction is N(2)-acetyl-L-ornithine + 2-oxoglutarate = N-acetyl-L-glutamate 5-semialdehyde + L-glutamate. It participates in amino-acid biosynthesis; L-arginine biosynthesis; N(2)-acetyl-L-ornithine from L-glutamate: step 4/4. The protein is Acetylornithine aminotransferase of Lactococcus lactis subsp. lactis (strain IL1403) (Streptococcus lactis).